A 599-amino-acid polypeptide reads, in one-letter code: Laccase-15 (599 aa).

Residues 1-29 form the signal peptide; it reads MKRCQSSRPTAAVAAVVAAVSMIIVLVSG. Plastocyanin-like domains are found at residues 46–162 and 173–328; these read VVSQ…PRHG and REVP…YSSN. Residues Asn-51 and Asn-92 are each glycosylated (N-linked (GlcNAc...) asparagine). Cu cation is bound by residues His-96 and His-98. N-linked (GlcNAc...) asparagine glycosylation occurs at Asn-124. His-141 and His-143 together coordinate Cu cation. 6 N-linked (GlcNAc...) asparagine glycosylation sites follow: Asn-193, Asn-217, Asn-331, Asn-355, Asn-412, and Asn-454. The region spanning 444–586 is the Plastocyanin-like 3 domain; that stretch reads ELAERPPRAY…AAVFIVEDGP (143 aa). Cu cation contacts are provided by Asn-503, His-506, His-508, His-565, Cys-566, His-567, His-571, and Met-576.

Belongs to the multicopper oxidase family. Cu cation is required as a cofactor.

The protein localises to the secreted. It localises to the extracellular space. The protein resides in the apoplast. It carries out the reaction 4 hydroquinone + O2 = 4 benzosemiquinone + 2 H2O. Its function is as follows. Lignin degradation and detoxification of lignin-derived products. The polypeptide is Laccase-15 (LAC15) (Oryza sativa subsp. japonica (Rice)).